A 60-amino-acid chain; its full sequence is Beta-toxin BotIT2 (60 aa).

The 60-residue stretch at 1–60 folds into the LCN-type CS-alpha/beta domain; sequence DGYIKGYKGCKITCVINDDYCDTECKAEGGTYGYCWKWGLACWCEDLPDEKRWKSETNTC. 4 cysteine pairs are disulfide-bonded: Cys10/Cys60, Cys14/Cys35, Cys21/Cys42, and Cys25/Cys44.

It belongs to the long (4 C-C) scorpion toxin superfamily. Sodium channel inhibitor family. Beta subfamily. As to expression, expressed by the venom gland.

The protein localises to the secreted. In terms of biological role, beta toxins bind voltage-independently at site-4 of sodium channels (Nav) and shift the voltage of activation toward more negative potentials thereby affecting sodium channel activation and promoting spontaneous and repetitive firing. This toxin specifically acts by inducing a new current with very slow activation/deactivation kinetics due to the transformation of normal fast channels into slow ones. It possess properties of excitatory and depressant toxins. It is highly active on insects and less active on mammals. The sequence is that of Beta-toxin BotIT2 from Buthus occitanus tunetanus (Common European scorpion).